The primary structure comprises 221 residues: Ribonuclease S-2 (221 aa).

The N-terminal stretch at 1-20 (MIYIFTMVFSLNVLILSSSA) is a signal peptide. RNA is bound at residue glutamine 31. Cysteine 37 and cysteine 44 form a disulfide bridge. Residues histidine 55, 91-92 (NV), phenylalanine 101, 104-105 (KQ), and 108-109 (KH) each bind RNA. Histidine 55 (proton donor) is an active-site residue. A disulfide bridge connects residues cysteine 70 and cysteine 112. A glycan (N-linked (GlcNAc...) asparagine) is linked at asparagine 91. The active site involves glutamine 105. Catalysis depends on histidine 109, which acts as the Proton acceptor. Residues asparagine 137, asparagine 153, and asparagine 195 are each glycosylated (N-linked (GlcNAc...) asparagine). Intrachain disulfides connect cysteine 176–cysteine 214 and cysteine 191–cysteine 202.

It belongs to the RNase T2 family. N-linked core structure at Asn-91, Asn-137, and Asn-153 contains xylose and at Asn-195 contains xylose and fucose.

It is found in the secreted. The protein localises to the extracellular space. The catalysed reaction is a ribonucleotidyl-ribonucleotide-RNA + H2O = a 3'-end 3'-phospho-ribonucleotide-RNA + a 5'-end dephospho-ribonucleoside-RNA + H(+). Its function is as follows. Self-incompatibility (SI) is the inherited ability of a flowering plant to prevent self-fertilization by discriminating between self and non-self pollen during pollination. In many species, self-incompatibility is controlled by the single, multiallelic locus S. In Pyrus pyrifolia (Chinese pear), this protein is Ribonuclease S-2.